A 259-amino-acid chain; its full sequence is Cytosolic Fe-S cluster assembly factor Nubp2 homolog (259 aa).

14 to 21 (GKGGVGKS) is an ATP binding site. The [4Fe-4S] cluster site is built by C188 and C191.

Belongs to the Mrp/NBP35 ATP-binding proteins family. NUBP2/CFD1 subfamily. As to quaternary structure, heterotetramer of 2 Nubp1 and 2 Nubp2 chains. The cofactor is [4Fe-4S] cluster.

The protein localises to the cytoplasm. In terms of biological role, component of the cytosolic iron-sulfur (Fe/S) protein assembly (CIA) machinery. Required for maturation of extramitochondrial Fe-S proteins. The Nubp1-Nubp2 heterotetramer forms a Fe-S scaffold complex, mediating the de novo assembly of an Fe-S cluster and its transfer to target apoproteins. This Aedes aegypti (Yellowfever mosquito) protein is Cytosolic Fe-S cluster assembly factor Nubp2 homolog.